The sequence spans 175 residues: ATP synthase subunit b, chloroplastic (175 aa).

The chain crosses the membrane as a helical span at residues 24-46 (VLNLAVVLAIVLTYVGDALRGLL).

The protein belongs to the ATPase B chain family. In terms of assembly, F-type ATPases have 2 components, F(1) - the catalytic core - and F(0) - the membrane proton channel. F(1) has five subunits: alpha(3), beta(3), gamma(1), delta(1), epsilon(1). F(0) has four main subunits: a(1), b(1), b'(1) and c(10-14). The alpha and beta chains form an alternating ring which encloses part of the gamma chain. F(1) is attached to F(0) by a central stalk formed by the gamma and epsilon chains, while a peripheral stalk is formed by the delta, b and b' chains.

Its subcellular location is the plastid. It localises to the chloroplast thylakoid membrane. Functionally, f(1)F(0) ATP synthase produces ATP from ADP in the presence of a proton or sodium gradient. F-type ATPases consist of two structural domains, F(1) containing the extramembraneous catalytic core and F(0) containing the membrane proton channel, linked together by a central stalk and a peripheral stalk. During catalysis, ATP synthesis in the catalytic domain of F(1) is coupled via a rotary mechanism of the central stalk subunits to proton translocation. Component of the F(0) channel, it forms part of the peripheral stalk, linking F(1) to F(0). The protein is ATP synthase subunit b, chloroplastic of Chlorella vulgaris (Green alga).